A 209-amino-acid chain; its full sequence is Uridine kinase (209 aa).

12-19 is a binding site for ATP; the sequence is GGSASGKT.

Belongs to the uridine kinase family.

The protein resides in the cytoplasm. It catalyses the reaction uridine + ATP = UMP + ADP + H(+). The catalysed reaction is cytidine + ATP = CMP + ADP + H(+). It functions in the pathway pyrimidine metabolism; CTP biosynthesis via salvage pathway; CTP from cytidine: step 1/3. Its pathway is pyrimidine metabolism; UMP biosynthesis via salvage pathway; UMP from uridine: step 1/1. This Chloroflexus aurantiacus (strain ATCC 29366 / DSM 635 / J-10-fl) protein is Uridine kinase.